Consider the following 112-residue polypeptide: Probable fatty acid-binding protein (112 aa).

The protein belongs to the calycin superfamily. Fatty-acid binding protein (FABP) family.

This is Probable fatty acid-binding protein from Anopheles gambiae (African malaria mosquito).